Consider the following 191-residue polypeptide: Mating-type-like protein ALPHA1 (191 aa).

Positions 118-174 (SKKRPMNAFMAFRTYYAQLGTGLKQNTLSVILSEAWNAPETDQNIWDIFAQQFNFAS) form a DNA-binding region, alpha box.

This sequence belongs to the MATALPHA1 family.

Its subcellular location is the nucleus. In terms of biological role, mating type proteins are sequence specific DNA-binding proteins that act as master switches in yeast differentiation by controlling gene expression in a cell type-specific fashion. Transcriptional activator that induces the transcription of alpha-specific genes. The polypeptide is Mating-type-like protein ALPHA1 (MTL1ALPHA1) (Candida glabrata (strain ATCC 2001 / BCRC 20586 / JCM 3761 / NBRC 0622 / NRRL Y-65 / CBS 138) (Yeast)).